The following is a 1268-amino-acid chain: SR-related and CTD-associated factor 8 (1268 aa).

The CID domain maps to 1 to 139; it reads MEAVKTFNSE…PLLDMAAGIP (139 aa). At threonine 6 the chain carries Phosphothreonine. A Glycyl lysine isopeptide (Lys-Gly) (interchain with G-Cter in SUMO1) cross-link involves residue lysine 18. Residue serine 273 is modified to Phosphoserine. Disordered stretches follow at residues 322 to 355 and 385 to 469; these read QQQP…QQHF and EIFE…PVRS. Over residues 342 to 354 the composition is skewed to polar residues; that stretch reads HSASPSQGSSQQH. Over residues 394 to 443 the composition is skewed to basic residues; the sequence is VAVRSRSRTHSRSRSRSPRKRRSRSRSGSRKRKHRKRSRSRSRERKRKSS. Over residues 447–461 the composition is skewed to basic and acidic residues; the sequence is SSERRAREREKERQK. Residues 477–551 enclose the RRM domain; sequence TTLWVGQVDK…KVIKIAWALN (75 aa). The residue at position 615 (threonine 615) is a Phosphothreonine. Residue serine 617 is modified to Phosphoserine. The tract at residues 753-808 is disordered; it reads AGNVFNPPSKAEPEEKVPHLTEHQIPSGENTRPVIPSDIPSSAPMLAQPPGASNTS. Over residues 763-774 the composition is skewed to basic and acidic residues; it reads AEPEEKVPHLTE. Asymmetric dimethylarginine occurs at positions 915, 925, and 936. The segment at 947–1063 is disordered; sequence QRGIPPPSVL…GRDHFGRPPV (117 aa). Residues 961 to 970 are compositionally biased toward pro residues; sequence HPPPRGPFPP. 2 stretches are compositionally biased toward basic and acidic residues: residues 1009 to 1025 and 1032 to 1063; these read EGDR…REGI and DVRD…RPPV. At arginine 1071 the chain carries Asymmetric dimethylarginine. The segment at 1199–1268 is disordered; sequence ATSQRKGENV…VVESTETEGT (70 aa). The span at 1249–1262 shows a compositional bias: low complexity; that stretch reads GTAAGVESEAVVES.

As to quaternary structure, interacts with POLR2A; via C-terminal heptapeptide repeat domain (CTD) phosphorylated at 'Ser-2' and 'Ser-5'. Identified in a complex with CDC5L and other spliceosomal proteins.

It is found in the nucleus. The protein resides in the nucleus matrix. Anti-terminator protein required to prevent early mRNA termination during transcription. Together with SCAF4, acts by suppressing the use of early, alternative poly(A) sites, thereby preventing the accumulation of non-functional truncated proteins. Mechanistically, associates with the phosphorylated C-terminal heptapeptide repeat domain (CTD) of the largest RNA polymerase II subunit (POLR2A), and subsequently binds nascent RNA upstream of early polyadenylation sites to prevent premature mRNA transcript cleavage and polyadenylation. Independently of SCAF4, also acts as a positive regulator of transcript elongation. The protein is SR-related and CTD-associated factor 8 of Rattus norvegicus (Rat).